We begin with the raw amino-acid sequence, 597 residues long: Elongation factor 4 (597 aa).

In terms of domain architecture, tr-type G spans 2 to 184 (KHIRNFSIIA…TIVKCIPAPE (183 aa)). GTP contacts are provided by residues 14–19 (DHGKST) and 131–134 (NKID).

Belongs to the TRAFAC class translation factor GTPase superfamily. Classic translation factor GTPase family. LepA subfamily.

The protein resides in the cell inner membrane. It catalyses the reaction GTP + H2O = GDP + phosphate + H(+). Functionally, required for accurate and efficient protein synthesis under certain stress conditions. May act as a fidelity factor of the translation reaction, by catalyzing a one-codon backward translocation of tRNAs on improperly translocated ribosomes. Back-translocation proceeds from a post-translocation (POST) complex to a pre-translocation (PRE) complex, thus giving elongation factor G a second chance to translocate the tRNAs correctly. Binds to ribosomes in a GTP-dependent manner. This chain is Elongation factor 4, found in Aliivibrio salmonicida (strain LFI1238) (Vibrio salmonicida (strain LFI1238)).